Consider the following 268-residue polypeptide: Serine/arginine-rich splicing factor SR30 (268 aa).

2 consecutive RRM domains span residues arginine 7 to glycine 82 and tyrosine 109 to serine 187. A compositionally biased stretch (basic and acidic residues) spans glutamate 186–serine 199. Residues glutamate 186 to glycine 268 form a disordered region. A phosphoserine mark is found at serine 193, serine 210, serine 212, serine 214, serine 219, serine 221, serine 227, serine 236, serine 246, serine 256, and serine 260. The span at arginine 207–glutamine 247 shows a compositional bias: low complexity. Positions arginine 257–glycine 268 are enriched in low complexity.

Belongs to the splicing factor SR family. SR subfamily. Component of the spliceosome. Interacts with SNRNP35, CYP59 and CYP63. In terms of processing, phosphorylated. Ubiquitous.

Its subcellular location is the nucleus speckle. It localises to the nucleus. The protein localises to the nucleoplasm. It is found in the cytoplasm. Regulatory splicing factor that modulates alternative splicing and gene expression in specific cell types. Autoregulates its own expression. Probably involved in intron recognition and spliceosome assembly. The polypeptide is Serine/arginine-rich splicing factor SR30 (SR30) (Arabidopsis thaliana (Mouse-ear cress)).